A 354-amino-acid polypeptide reads, in one-letter code: GTPase Obg (354 aa).

The Obg domain maps to 1–159; that stretch reads MQFIDHAEIE…KQLRLELKLL (159 aa). One can recognise an OBG-type G domain in the interval 160–328; that stretch reads AEVGIIGLPN…LLQEIWDVLD (169 aa). GTP-binding positions include 166-173, 191-195, 213-216, 280-283, and 309-311; these read GLPNAGKS, FTTLI, DIPG, NKLD, and SAV. Residues Ser-173 and Thr-193 each contribute to the Mg(2+) site.

It belongs to the TRAFAC class OBG-HflX-like GTPase superfamily. OBG GTPase family. As to quaternary structure, monomer. It depends on Mg(2+) as a cofactor.

Its subcellular location is the cytoplasm. In terms of biological role, an essential GTPase which binds GTP, GDP and possibly (p)ppGpp with moderate affinity, with high nucleotide exchange rates and a fairly low GTP hydrolysis rate. Plays a role in control of the cell cycle, stress response, ribosome biogenesis and in those bacteria that undergo differentiation, in morphogenesis control. This Picosynechococcus sp. (strain ATCC 27264 / PCC 7002 / PR-6) (Agmenellum quadruplicatum) protein is GTPase Obg.